We begin with the raw amino-acid sequence, 183 residues long: Abscisic acid receptor PYL10 (183 aa).

Positions 20–172 are START-like; that stretch reads HELVESQCSS…NLNSLADVTE (153 aa). An intrachain disulfide couples cysteine 27 to cysteine 153. Residues lysine 56, 85–90, 112–118, and glutamate 137 each bind abscisate; these read ATKSTE and RLKNYSS. The short motif at 81-85 is the Gate loop element; that stretch reads SGLPA. The short motif at 111–113 is the Latch loop element; that stretch reads HRL.

It belongs to the PYR/PYL/RCAR abscisic acid intracellular receptor family. As to quaternary structure, monomer. Forms heterodimer with PYL13, thus antagonizing PP2Cs-binding and ABA-independent inhibition of PP2Cs. Homodimer. Binds ABA on one subunit only. Binds to CARs protein in an ABA-independent manner, both at the plasma membrane and in the nucleus. Interacts with ABI1 and HAB1, and possibly with other PP2Cs, in an ABA-independent manner.

Its subcellular location is the cytoplasm. The protein localises to the nucleus. It is found in the cell membrane. Receptor for abscisic acid (ABA) required for ABA-mediated responses such as stomatal closure and germination inhibition. Inhibits the activity of group-A protein phosphatases type 2C (PP2Cs) in an ABA-independent manner but more efficiently when activated by ABA. Can be activated by both (-)-ABA and (+)-ABA. This is Abscisic acid receptor PYL10 (PYL10) from Arabidopsis thaliana (Mouse-ear cress).